A 214-amino-acid chain; its full sequence is A-type ATP synthase subunit D (214 aa).

It belongs to the V-ATPase D subunit family. In terms of assembly, has multiple subunits with at least A(3), B(3), C, D, E, F, H, I and proteolipid K(x).

The protein localises to the cell membrane. In terms of biological role, component of the A-type ATP synthase that produces ATP from ADP in the presence of a proton gradient across the membrane. This is A-type ATP synthase subunit D from Pyrococcus furiosus (strain ATCC 43587 / DSM 3638 / JCM 8422 / Vc1).